We begin with the raw amino-acid sequence, 493 residues long: Alpha-amylase-related protein (493 aa).

Residues 1 to 19 form the signal peptide; that stretch reads MFKFALTQTLCLAGSLSLA. At Gln-20 the chain carries Pyrrolidone carboxylic acid. Cys-47 and Cys-103 are disulfide-bonded. 3 residues coordinate Ca(2+): Asn-117, Gln-168, and Asp-177. A disulfide bond links Cys-156 and Cys-170. Residue Arg-205 coordinates chloride. Residue Asp-207 is the Nucleophile of the active site. His-211 is a Ca(2+) binding site. Catalysis depends on Glu-244, which acts as the Proton donor. Chloride contacts are provided by Asn-307 and Arg-342. Disulfide bonds link Cys-375–Cys-381, Cys-417–Cys-440, and Cys-447–Cys-459.

The protein belongs to the glycosyl hydrolase 13 family. In terms of assembly, monomer. Requires Ca(2+) as cofactor. The cofactor is chloride.

The protein resides in the secreted. It catalyses the reaction Endohydrolysis of (1-&gt;4)-alpha-D-glucosidic linkages in polysaccharides containing three or more (1-&gt;4)-alpha-linked D-glucose units.. This is Alpha-amylase-related protein (Amyrel) from Drosophila mauritiana (Fruit fly).